Consider the following 282-residue polypeptide: ADP-ribosyl cyclase/cyclic ADP-ribose hydrolase (282 aa).

Residues 1-24 form the signal peptide; the sequence is MSPVAIVACVCLAVTLTRISPSEA. Intrachain disulfides connect Cys-39–Cys-58, Cys-75–Cys-155, Cys-136–Cys-149, Cys-230–Cys-251, and Cys-263–Cys-272.

The protein belongs to the ADP-ribosyl cyclase family. In terms of tissue distribution, ovotestis.

It localises to the cytoplasmic vesicle. The catalysed reaction is NAD(+) = cyclic ADP-beta-D-ribose + nicotinamide + H(+). The enzyme catalyses NAD(+) + H2O = ADP-D-ribose + nicotinamide + H(+). It catalyses the reaction nicotinate + NADP(+) = nicotinate-adenine dinucleotide phosphate + nicotinamide. With respect to regulation, activity is presumably regulated by its sequestration in vesicles before egg fertilization. After fertilization and upon NADase release, it could then be regulated via its potential phosphorylation sites. Synthesizes cyclic ADP-ribose (cADPR), a second messenger for calcium mobilization from endoplasmic reticulum. Might make the Ca(2+) mobilizer nicotinate-adenine dinucleotide phosphate. Does not have cADPR hydrolase activity. In Aplysia kurodai (Kuroda's sea hare), this protein is ADP-ribosyl cyclase/cyclic ADP-ribose hydrolase.